A 488-amino-acid chain; its full sequence is Lysine--tRNA ligase (488 aa).

Residues Glu-397 and Glu-404 each coordinate Mg(2+).

It belongs to the class-II aminoacyl-tRNA synthetase family. In terms of assembly, homodimer. Mg(2+) serves as cofactor.

It is found in the cytoplasm. It catalyses the reaction tRNA(Lys) + L-lysine + ATP = L-lysyl-tRNA(Lys) + AMP + diphosphate. In Mycoplasmopsis fermentans (strain ATCC 19989 / NBRC 14854 / NCTC 10117 / PG18) (Mycoplasma fermentans), this protein is Lysine--tRNA ligase (lysS).